Consider the following 157-residue polypeptide: MPRPTKFRRVEFFPENNYFVPWGKPKCEIHEVVLKVEELEAMRLKDIEELNQEQCAEKMEISRQTFQNIIDSARKKVAIALTEGNAIKISGGHYTTKLCKLKCIDCEEIYEINYEQDRHLCPNCGSEKVICNKKADFCRRWCKGQNRKEQYEESKNK.

This sequence belongs to the UPF0251 family.

The chain is UPF0251 protein CLD_3165 from Clostridium botulinum (strain Okra / Type B1).